A 494-amino-acid chain; its full sequence is Voltage-gated potassium channel regulatory subunit KCNF1 (494 aa).

Topologically, residues 1 to 183 are cytoplasmic; that stretch reads MDGSGERSLP…KPESSCPARV (183 aa). A helical membrane pass occupies residues 184–204; sequence VAVLSFLLILVSSVVMCMGTI. A helical transmembrane segment spans residues 224–244; it reads NVETACIGWFTLEYLLRLFSS. Over 245–249 the chain is Cytoplasmic; that stretch reads PNKLH. A helical transmembrane segment spans residues 250–270; it reads FALSFMNIVDVLAILPFYVSL. The helical; Voltage-sensor transmembrane segment at 290–310 threads the bilayer; it reads QALRIMRIARIFKLARHSSGL. Residues 311-324 lie on the Cytoplasmic side of the membrane; the sequence is QTLTYALKRSFKEL. The helical transmembrane segment at 325–345 threads the bilayer; that stretch reads GLLLMYLAVGIFVFSALGYTM. Positions 358 to 378 form an intramembrane region, pore-forming; sequence PQSFWWAIITMTTVGYGDIYP. Positions 370–375 match the Selectivity filter motif; that stretch reads TVGYGD. The chain crosses the membrane as a helical span at residues 386–406; that stretch reads NAAISFLCGVIAIALPIHPII. Over 407-494 the chain is Cytoplasmic; the sequence is NNFVRYYNKQ…HHRTRLQSCK (88 aa). Residues 433 to 469 are disordered; sequence NSSSGGEGKTGGSRSDLDNLPPEPAGKEAPSCSSRLK.

This sequence belongs to the potassium channel family. F (TC 1.A.1.2) subfamily. Kv5.1/KCNF1 sub-subfamily. As to quaternary structure, heterotetramer with KCNB1 or KCNB2. As to expression, detected in heart, brain, liver, skeletal muscle, kidney and pancreas.

It localises to the cell membrane. Its function is as follows. Regulatory alpha-subunit of the voltage-gated potassium (Kv) channel which, when coassembled with KCNB1 or KCNB2, can modulate their expression and their gating kinetics by acting on deactivation upon repolarization and inactivation during maintained depolarization. Accelerates inactivation but has relatively little effect on deactivation. Coexpression with KCNB1 or KCNB2 markedly slows inactivation. Each modulatory subunit has its own specific properties of regulation, and can lead to extensive inhibitions, to large changes in kinetics, and/or to large shifts in the voltage dependencies of the inactivation process. The gating kinetics depends on the nature and stoichiometry of the associated regulatory sunbunit. Fails to produce a potassium current when expressed alone. The chain is Voltage-gated potassium channel regulatory subunit KCNF1 from Homo sapiens (Human).